A 441-amino-acid polypeptide reads, in one-letter code: UDP-N-acetylglucosamine 1-carboxyvinyltransferase 1 (441 aa).

42–43 (KN) contacts phosphoenolpyruvate. Position 117 (Arg-117) interacts with UDP-N-acetyl-alpha-D-glucosamine. Cys-141 functions as the Proton donor in the catalytic mechanism. Cys-141 is modified (2-(S-cysteinyl)pyruvic acid O-phosphothioketal). UDP-N-acetyl-alpha-D-glucosamine-binding residues include Asp-330 and Ile-352.

This sequence belongs to the EPSP synthase family. MurA subfamily.

The protein localises to the cytoplasm. It catalyses the reaction phosphoenolpyruvate + UDP-N-acetyl-alpha-D-glucosamine = UDP-N-acetyl-3-O-(1-carboxyvinyl)-alpha-D-glucosamine + phosphate. It participates in cell wall biogenesis; peptidoglycan biosynthesis. Cell wall formation. Adds enolpyruvyl to UDP-N-acetylglucosamine. This is UDP-N-acetylglucosamine 1-carboxyvinyltransferase 1 from Symbiobacterium thermophilum (strain DSM 24528 / JCM 14929 / IAM 14863 / T).